The chain runs to 366 residues: Beta sliding clamp (366 aa).

Residues 1-125 (MKFTVEREHL…FPNLDDWQSE (125 aa)) form an i region. The II stretch occupies residues 126-253 (VEFTLPQATM…YRRVLPKNPD (128 aa)). The tract at residues 254-366 (KHLEAGCDLL…AAYVVMPMRL (113 aa)) is III.

Belongs to the beta sliding clamp family. As to quaternary structure, forms a ring-shaped head-to-tail homodimer around DNA which binds and tethers DNA polymerases and other proteins to the DNA. The DNA replisome complex has a single clamp-loading complex (3 tau and 1 each of delta, delta', psi and chi subunits) which binds 3 Pol III cores (1 core on the leading strand and 2 on the lagging strand) each with a beta sliding clamp dimer. Additional proteins in the replisome are other copies of gamma, psi and chi, Ssb, DNA helicase and RNA primase.

The protein localises to the cytoplasm. Its function is as follows. Confers DNA tethering and processivity to DNA polymerases and other proteins. Acts as a clamp, forming a ring around DNA (a reaction catalyzed by the clamp-loading complex) which diffuses in an ATP-independent manner freely and bidirectionally along dsDNA. Initially characterized for its ability to contact the catalytic subunit of DNA polymerase III (Pol III), a complex, multichain enzyme responsible for most of the replicative synthesis in bacteria; Pol III exhibits 3'-5' exonuclease proofreading activity. The beta chain is required for initiation of replication as well as for processivity of DNA replication. In Escherichia coli O157:H7, this protein is Beta sliding clamp (dnaN).